Reading from the N-terminus, the 138-residue chain is Large ribosomal subunit protein uL29 (138 aa).

The tract at residues 1-79 (MAKSKMLDLR…TNKVIKADYN (79 aa)) is large ribosomal subunit protein uL29. The unknown stretch occupies residues 80-138 (KAVEEAEKAGKEVRAKQRKFLEEQYGQQSQTKVNEADIQKAMQAAEQETVEPDTKGETK). Positions 103-138 (QYGQQSQTKVNEADIQKAMQAAEQETVEPDTKGETK) are disordered.

It belongs to the universal ribosomal protein uL29 family.

In Mycoplasma capricolum subsp. capricolum (strain California kid / ATCC 27343 / NCTC 10154), this protein is Large ribosomal subunit protein uL29.